The chain runs to 605 residues: DNA mismatch repair protein MutL (605 aa).

It belongs to the DNA mismatch repair MutL/HexB family.

Its function is as follows. This protein is involved in the repair of mismatches in DNA. It is required for dam-dependent methyl-directed DNA mismatch repair. May act as a 'molecular matchmaker', a protein that promotes the formation of a stable complex between two or more DNA-binding proteins in an ATP-dependent manner without itself being part of a final effector complex. This Rhizobium meliloti (strain 1021) (Ensifer meliloti) protein is DNA mismatch repair protein MutL.